A 157-amino-acid polypeptide reads, in one-letter code: 6,7-dimethyl-8-ribityllumazine synthase (157 aa).

5-amino-6-(D-ribitylamino)uracil contacts are provided by residues Phe-22, 56–58 (AME), and 80–82 (AVV). 85–86 (ET) serves as a coordination point for (2S)-2-hydroxy-3-oxobutyl phosphate. Residue His-88 is the Proton donor of the active site. Phe-113 contributes to the 5-amino-6-(D-ribitylamino)uracil binding site. Residue Arg-127 participates in (2S)-2-hydroxy-3-oxobutyl phosphate binding.

This sequence belongs to the DMRL synthase family.

It catalyses the reaction (2S)-2-hydroxy-3-oxobutyl phosphate + 5-amino-6-(D-ribitylamino)uracil = 6,7-dimethyl-8-(1-D-ribityl)lumazine + phosphate + 2 H2O + H(+). It participates in cofactor biosynthesis; riboflavin biosynthesis; riboflavin from 2-hydroxy-3-oxobutyl phosphate and 5-amino-6-(D-ribitylamino)uracil: step 1/2. Functionally, catalyzes the formation of 6,7-dimethyl-8-ribityllumazine by condensation of 5-amino-6-(D-ribitylamino)uracil with 3,4-dihydroxy-2-butanone 4-phosphate. This is the penultimate step in the biosynthesis of riboflavin. This chain is 6,7-dimethyl-8-ribityllumazine synthase, found in Levilactobacillus brevis (strain ATCC 367 / BCRC 12310 / CIP 105137 / JCM 1170 / LMG 11437 / NCIMB 947 / NCTC 947) (Lactobacillus brevis).